The following is a 167-amino-acid chain: Putative NADH-quinone oxidoreductase subunit B 2 (167 aa).

This sequence belongs to the complex I 20 kDa subunit family. NDH-1 is composed of 14 different subunits. Subunits NuoB, C, D, E, F, and G constitute the peripheral sector of the complex.

The protein localises to the cell inner membrane. It carries out the reaction a quinone + NADH + 5 H(+)(in) = a quinol + NAD(+) + 4 H(+)(out). In terms of biological role, NDH-1 shuttles electrons from NADH, via FMN and iron-sulfur (Fe-S) centers, to quinones in the respiratory chain. Couples the redox reaction to proton translocation (for every two electrons transferred, four hydrogen ions are translocated across the cytoplasmic membrane), and thus conserves the redox energy in a proton gradient. This chain is Putative NADH-quinone oxidoreductase subunit B 2, found in Burkholderia pseudomallei (strain 1710b).